A 336-amino-acid chain; its full sequence is MKLSDFDYHLPKELIAKYPAQPRDSCRLMVLNRKDKTIEHRIFRDVIDYLKPGDTLVLNNTKVIPARLIGKKEKTNANIEVFLLRPIEDNIWETLIKNVRRLKKNQKIIISDDFYVEFLSKDDEKAIVKIHSKDIKSDLEKYGHVPLPPYIEREDEEKDKDYYQTVFADKEGSVASPTAGLHFTKELLEKIKEKGVNIAYITLHVGLGTFKPVKTEDITKHKMHEEYFTIPKETLEMIKKTKENKKSLVAVGTTVVRALETYGKFGKTEGFTDIFIYPPYEFKIVDKLITNFHLPKSTLLMLVSAFADRDFILRAYNGAVKEKYRFFSYGDAMLIV.

The protein belongs to the QueA family. Monomer.

Its subcellular location is the cytoplasm. It carries out the reaction 7-aminomethyl-7-carbaguanosine(34) in tRNA + S-adenosyl-L-methionine = epoxyqueuosine(34) in tRNA + adenine + L-methionine + 2 H(+). It participates in tRNA modification; tRNA-queuosine biosynthesis. Its function is as follows. Transfers and isomerizes the ribose moiety from AdoMet to the 7-aminomethyl group of 7-deazaguanine (preQ1-tRNA) to give epoxyqueuosine (oQ-tRNA). In Sulfurihydrogenibium sp. (strain YO3AOP1), this protein is S-adenosylmethionine:tRNA ribosyltransferase-isomerase.